Reading from the N-terminus, the 374-residue chain is tRNA-specific 2-thiouridylase MnmA (374 aa).

ATP contacts are provided by residues 8 to 15 (GLSGGVDS) and Met34. An interaction with target base in tRNA region spans residues 104–106 (NPD). Cys109 functions as the Nucleophile in the catalytic mechanism. Cys109 and Cys208 are disulfide-bonded. Gly134 contributes to the ATP binding site. The segment at 158 to 160 (KDQ) is interaction with tRNA. The Cysteine persulfide intermediate role is filled by Cys208. The interval 321 to 322 (RY) is interaction with tRNA.

It belongs to the MnmA/TRMU family.

Its subcellular location is the cytoplasm. It carries out the reaction S-sulfanyl-L-cysteinyl-[protein] + uridine(34) in tRNA + AH2 + ATP = 2-thiouridine(34) in tRNA + L-cysteinyl-[protein] + A + AMP + diphosphate + H(+). In terms of biological role, catalyzes the 2-thiolation of uridine at the wobble position (U34) of tRNA, leading to the formation of s(2)U34. In Mesoplasma florum (strain ATCC 33453 / NBRC 100688 / NCTC 11704 / L1) (Acholeplasma florum), this protein is tRNA-specific 2-thiouridylase MnmA.